The sequence spans 321 residues: Ribose-phosphate pyrophosphokinase C (321 aa).

Mg(2+) contacts are provided by Asp132 and Asp147. The segment at 214–229 (SGKVAIIIGSIADTCE) is binding of phosphoribosylpyrophosphate.

Belongs to the ribose-phosphate pyrophosphokinase family. It depends on Mg(2+) as a cofactor.

Its subcellular location is the cytoplasm. The catalysed reaction is D-ribose 5-phosphate + ATP = 5-phospho-alpha-D-ribose 1-diphosphate + AMP + H(+). It participates in metabolic intermediate biosynthesis; 5-phospho-alpha-D-ribose 1-diphosphate biosynthesis; 5-phospho-alpha-D-ribose 1-diphosphate from D-ribose 5-phosphate (route I): step 1/1. This is Ribose-phosphate pyrophosphokinase C (prsC) from Dictyostelium discoideum (Social amoeba).